The following is a 107-amino-acid chain: Small ribosomal subunit protein bS16 (107 aa).

The tract at residues 85-107 (REARNNPEKAVPRKERKAAEAGK) is disordered.

This sequence belongs to the bacterial ribosomal protein bS16 family.

The chain is Small ribosomal subunit protein bS16 from Rhodopseudomonas palustris (strain BisB5).